A 238-amino-acid chain; its full sequence is Large ribosomal subunit protein uL5c (238 aa).

The protein belongs to the universal ribosomal protein uL5 family. Part of the 50S ribosomal subunit; contacts the 5S rRNA.

It is found in the plastid. The protein resides in the chloroplast. In terms of biological role, binds 5S rRNA, forms part of the central protuberance of the 50S subunit. The protein is Large ribosomal subunit protein uL5c (rpl5) of Thalassiosira pseudonana (Marine diatom).